The primary structure comprises 197 residues: Nucleoid occlusion factor SlmA (197 aa).

The 61-residue stretch at 7 to 67 (INRREHILQC…GLIEFIEESL (61 aa)) folds into the HTH tetR-type domain. Residues 30 to 49 (TTAKLAAEVGVSEAALYRHF) constitute a DNA-binding region (H-T-H motif). A coiled-coil region spans residues 109–136 (DALLGENERLRSRISQLFSKIETHLKQI).

This sequence belongs to the nucleoid occlusion factor SlmA family. As to quaternary structure, homodimer. Interacts with FtsZ.

It localises to the cytoplasm. The protein resides in the nucleoid. Its function is as follows. Required for nucleoid occlusion (NO) phenomenon, which prevents Z-ring formation and cell division over the nucleoid. Acts as a DNA-associated cell division inhibitor that binds simultaneously chromosomal DNA and FtsZ, and disrupts the assembly of FtsZ polymers. SlmA-DNA-binding sequences (SBS) are dispersed on non-Ter regions of the chromosome, preventing FtsZ polymerization at these regions. The sequence is that of Nucleoid occlusion factor SlmA from Shewanella pealeana (strain ATCC 700345 / ANG-SQ1).